We begin with the raw amino-acid sequence, 622 residues long: Low affinity potassium transport system protein Kup (622 aa).

The next 12 helical transmembrane spans lie at 9–29, 49–69, 103–123, 137–157, 165–185, 213–233, 247–267, 276–296, 337–357, 363–383, 396–416, and 419–439; these read LPAITLAAIGVVYGDIGTSPL, VFGFLSLIFWLLIFVVSIKYL, VIMGLIGGSFFYGEVVITPAI, PQLDTWIVPLSIIVLTLLFMI, VGKLFAPIMLTWFLILAGLGL, VSFIALGAVVLSITGGEALYA, WFTVVLPSLTLNYFGQGALLL, PFFLLAPDWALIPLLIIAALA, IYIPFVNWMLYVAVVIVIVSF, LAAAYGIAVTGTMVLTSILST, FVALILIAFLCVDIPLFTANL, and LLSGGWLPLSLGTVMFIVMTT.

The protein belongs to the HAK/KUP transporter (TC 2.A.72) family.

It localises to the cell inner membrane. It catalyses the reaction K(+)(in) + H(+)(in) = K(+)(out) + H(+)(out). In terms of biological role, responsible for the low-affinity transport of potassium into the cell. Likely operates as a K(+):H(+) symporter. The chain is Low affinity potassium transport system protein Kup from Escherichia coli O157:H7 (strain EC4115 / EHEC).